The primary structure comprises 470 residues: Ribulose bisphosphate carboxylase large chain (470 aa).

Positions 118 and 168 each coordinate substrate. The active-site Proton acceptor is Lys170. Lys172 lines the substrate pocket. Mg(2+) contacts are provided by Lys196, Asp198, and Glu199. Lys196 is subject to N6-carboxylysine. Catalysis depends on His289, which acts as the Proton acceptor. Substrate-binding residues include Arg290, His322, and Ser374.

This sequence belongs to the RuBisCO large chain family. Type I subfamily. Heterohexadecamer of 8 large chains and 8 small chains; disulfide-linked. The disulfide link is formed within the large subunit homodimers. RuBisCO interacts with the C-terminus of CcmM, and can be found in complexes that also include carbonic anhydrase (ccaA). RuBisCO associates with both the internal and shell portion of carboxysomes. Mg(2+) is required as a cofactor. Post-translationally, the disulfide bond which can form in the large chain dimeric partners within the hexadecamer appears to be associated with oxidative stress and protein turnover.

The protein resides in the carboxysome. It carries out the reaction 2 (2R)-3-phosphoglycerate + 2 H(+) = D-ribulose 1,5-bisphosphate + CO2 + H2O. The enzyme catalyses D-ribulose 1,5-bisphosphate + O2 = 2-phosphoglycolate + (2R)-3-phosphoglycerate + 2 H(+). Functionally, ruBisCO catalyzes two reactions: the carboxylation of D-ribulose 1,5-bisphosphate, the primary event in carbon dioxide fixation, as well as the oxidative fragmentation of the pentose substrate in the photorespiration process. Both reactions occur simultaneously and in competition at the same active site. The protein is Ribulose bisphosphate carboxylase large chain of Synechocystis sp. (strain ATCC 27184 / PCC 6803 / Kazusa).